Reading from the N-terminus, the 421-residue chain is D-amino acid dehydrogenase (421 aa).

3-17 (ILILGSGVVGTASAY) is a binding site for FAD.

Belongs to the DadA oxidoreductase family. FAD serves as cofactor.

The catalysed reaction is a D-alpha-amino acid + A + H2O = a 2-oxocarboxylate + AH2 + NH4(+). The protein operates within amino-acid degradation; D-alanine degradation; NH(3) and pyruvate from D-alanine: step 1/1. Its function is as follows. Oxidative deamination of D-amino acids. The chain is D-amino acid dehydrogenase from Xanthobacter autotrophicus (strain ATCC BAA-1158 / Py2).